We begin with the raw amino-acid sequence, 226 residues long: Glutathione S-transferase-like protein gedE (226 aa).

One can recognise a GST N-terminal domain in the interval 4 to 85 (LLPIKVWGQG…YLVERYDTAH (82 aa)). The region spanning 92-226 (DTNDAQHARQ…VLSAVMPPPS (135 aa)) is the GST C-terminal domain.

It belongs to the GST superfamily.

Its pathway is secondary metabolite biosynthesis. In terms of biological role, glutathione S-transferase-like protein; part of the gene cluster that mediates the biosynthesis of geodin, an intermediate in the biosynthesis of other natural products. The pathway begins with the synthesis of atrochrysone thioester by the polyketide synthase (PKS) gedC. The atrochrysone carboxyl ACP thioesterase gedB then breaks the thioester bond and releases the atrochrysone carboxylic acid from gedC. The atrochrysone carboxylic acid is then converted to atrochrysone which is further transformed into emodinanthrone. The next step is performed by the emodinanthrone oxygenase gedH that catalyzes the oxidation of emodinanthrone to emodin. Emodin O-methyltransferase encoded probably by gedA then catalyzes methylation of the 8-hydroxy group of emodin to form questin. Ring cleavage of questin by questin oxidase gedK leads to desmethylsulochrin via several intermediates including questin epoxide. Another methylation step probably catalyzed by methyltransferase gedG leads to the formation of sulochrin which is further converted to dihydrogeodin by the sulochrin halogenase gedL. Finally, the dihydrogeodin oxidase gedJ catalyzes the stereospecific phenol oxidative coupling reaction converting dihydrogeodin to geodin. The polypeptide is Glutathione S-transferase-like protein gedE (Aspergillus terreus (strain NIH 2624 / FGSC A1156)).